The following is a 177-amino-acid chain: ATP synthase subunit b (177 aa).

The helical transmembrane segment at 15–35 threads the bilayer; sequence GISGGTIIYQLLMFIILLALL.

This sequence belongs to the ATPase B chain family. As to quaternary structure, F-type ATPases have 2 components, F(1) - the catalytic core - and F(0) - the membrane proton channel. F(1) has five subunits: alpha(3), beta(3), gamma(1), delta(1), epsilon(1). F(0) has three main subunits: a(1), b(2) and c(10-14). The alpha and beta chains form an alternating ring which encloses part of the gamma chain. F(1) is attached to F(0) by a central stalk formed by the gamma and epsilon chains, while a peripheral stalk is formed by the delta and b chains.

It is found in the cell membrane. In terms of biological role, f(1)F(0) ATP synthase produces ATP from ADP in the presence of a proton or sodium gradient. F-type ATPases consist of two structural domains, F(1) containing the extramembraneous catalytic core and F(0) containing the membrane proton channel, linked together by a central stalk and a peripheral stalk. During catalysis, ATP synthesis in the catalytic domain of F(1) is coupled via a rotary mechanism of the central stalk subunits to proton translocation. Component of the F(0) channel, it forms part of the peripheral stalk, linking F(1) to F(0). The sequence is that of ATP synthase subunit b from Geobacillus kaustophilus (strain HTA426).